The sequence spans 443 residues: Glutamyl-tRNA reductase (443 aa).

Substrate-binding positions include 49–52 (TCNR), Ser109, 114–116 (ETQ), and Gln120. The active-site Nucleophile is Cys50. 189–194 (GAGKMG) lines the NADP(+) pocket.

Belongs to the glutamyl-tRNA reductase family. In terms of assembly, homodimer.

The catalysed reaction is (S)-4-amino-5-oxopentanoate + tRNA(Glu) + NADP(+) = L-glutamyl-tRNA(Glu) + NADPH + H(+). Its pathway is porphyrin-containing compound metabolism; protoporphyrin-IX biosynthesis; 5-aminolevulinate from L-glutamyl-tRNA(Glu): step 1/2. Functionally, catalyzes the NADPH-dependent reduction of glutamyl-tRNA(Glu) to glutamate 1-semialdehyde (GSA). The protein is Glutamyl-tRNA reductase of Bacillus mycoides (strain KBAB4) (Bacillus weihenstephanensis).